The chain runs to 456 residues: Hydroxymethylglutaryl coenzyme A synthase (456 aa).

Position 34 (A34) interacts with (3S)-3-hydroxy-3-methylglutaryl-CoA. E85 acts as the Proton donor/acceptor in catalysis. C119, T161, S211, H258, K267, N335, and S369 together coordinate (3S)-3-hydroxy-3-methylglutaryl-CoA. Catalysis depends on C119, which acts as the Acyl-thioester intermediate. The active-site Proton donor/acceptor is H258.

This sequence belongs to the thiolase-like superfamily. HMG-CoA synthase family.

The enzyme catalyses acetoacetyl-CoA + acetyl-CoA + H2O = (3S)-3-hydroxy-3-methylglutaryl-CoA + CoA + H(+). HMG-CoA synthase; part of the gene cluster that mediates the biosynthesis of 1233A, a natural compound known as an inhibitor of HMG-CoA synthase in the mevalonate pathway and with antibacterial and antifungal activities. This enzyme condenses acetyl-CoA with acetoacetyl-CoA to form HMG-CoA, which is the substrate for HMG-CoA reductase. As part of the 1233A biosynthesis cluster, is involved in conferring self-resistance to 1233A. The sequence is that of Hydroxymethylglutaryl coenzyme A synthase from Fusarium sp.